We begin with the raw amino-acid sequence, 429 residues long: Polypyrimidine tract-binding protein homolog 2 (429 aa).

Ser-2 carries the post-translational modification N-acetylserine. 3 RRM domains span residues 18–96, 110–197, and 243–323; these read KVLH…YSNR, GNVL…YSAH, and SNVL…YSRH. The segment at 331-429 is disordered; that stretch reads NNDRSRDYTM…QHYGGPGPMH (99 aa). Low complexity predominate over residues 367 to 381; sequence GGSHHQQQQQPQGGW. The segment covering 382–397 has biased composition (gly residues); the sequence is VQPGGQGSMGMGGGGH.

It localises to the nucleus. In terms of biological role, plays a role in pre-mRNA splicing. Binds to the polypyrimidine tract of introns. May promote the binding of U2 snRNP to pre-mRNA. The protein is Polypyrimidine tract-binding protein homolog 2 of Arabidopsis thaliana (Mouse-ear cress).